A 233-amino-acid chain; its full sequence is 2-phytyl-1,4-naphtoquinone methyltransferase (233 aa).

This sequence belongs to the class I-like SAM-binding methyltransferase superfamily. MenG/UbiE family.

It catalyses the reaction demethylphylloquinol + S-adenosyl-L-methionine = phylloquinol + S-adenosyl-L-homocysteine + H(+). The protein operates within cofactor biosynthesis; phylloquinone biosynthesis. Its function is as follows. Methyltransferase required for the conversion of 2-phytyl-1,4-beta-naphthoquinol to phylloquinol. The sequence is that of 2-phytyl-1,4-naphtoquinone methyltransferase from Synechococcus elongatus (strain ATCC 33912 / PCC 7942 / FACHB-805) (Anacystis nidulans R2).